The chain runs to 116 residues: Large ribosomal subunit protein bL20 (116 aa).

It belongs to the bacterial ribosomal protein bL20 family.

Binds directly to 23S ribosomal RNA and is necessary for the in vitro assembly process of the 50S ribosomal subunit. It is not involved in the protein synthesizing functions of that subunit. This is Large ribosomal subunit protein bL20 from Nautilia profundicola (strain ATCC BAA-1463 / DSM 18972 / AmH).